We begin with the raw amino-acid sequence, 408 residues long: FAD-dependent monooxygenase nscC (408 aa).

The first 20 residues, 1 to 20 (MASRLPILIIGAGISGLTTA), serve as a signal peptide directing secretion. Residues Glu-34 and Ala-45 each contribute to the FAD site. Residues Asn-91 and Asn-103 are each glycosylated (N-linked (GlcNAc...) asparagine). Arg-119 serves as a coordination point for FAD. N-linked (GlcNAc...) asparagine glycosylation is found at Asn-170 and Asn-231. Residues Asp-328 and Gly-341 each contribute to the FAD site.

The protein belongs to the paxM FAD-dependent monooxygenase family. FAD serves as cofactor.

The protein operates within secondary metabolite biosynthesis. Its function is as follows. FAD-dependent monooxygenase; part of the gene cluster that mediates the biosynthesis of neosartoricin, a prenylated anthracenone that exhibits T-cell antiproliferative activity, suggestive of a physiological role as an immunosuppressive agent. The non-reducing polyketide synthase nscA probably synthesizes and cyclizes the decaketide backbone. The hydrolase nscB then mediates the product release through hydrolysis followed by spontaneous decarboxylation. The prenyltransferase nscD catalyzes the addition of the dimethylallyl group to the aromatic C5. The FAD-dependent monooxygenase nscC is then responsible for the stereospecific hydroxylation at C2. There is no gene encoding O-acetyltransferase in the nsc gene cluster; thus, the last step of 2-O-acetylation leading to neosartoricin may be catalyzed by an unidentified O-acetyltransferase. The polypeptide is FAD-dependent monooxygenase nscC (Aspergillus fumigatus (strain ATCC MYA-4609 / CBS 101355 / FGSC A1100 / Af293) (Neosartorya fumigata)).